The following is a 299-amino-acid chain: Putative KilA-N domain-containing protein R879 (299 aa).

A KilA-N domain is found at 1 to 75 (MKSDNGILMS…IKVSEIVLSY (75 aa)). The stretch at 76–150 (HAKEAIKEKE…DKKINELLSK (75 aa)) forms a coiled coil.

In Acanthamoeba polyphaga mimivirus (APMV), this protein is Putative KilA-N domain-containing protein R879.